Reading from the N-terminus, the 428-residue chain is Histidine--tRNA ligase (428 aa).

The protein belongs to the class-II aminoacyl-tRNA synthetase family. In terms of assembly, homodimer.

The protein resides in the cytoplasm. It catalyses the reaction tRNA(His) + L-histidine + ATP = L-histidyl-tRNA(His) + AMP + diphosphate + H(+). In Mesomycoplasma hyopneumoniae (strain J / ATCC 25934 / NCTC 10110) (Mycoplasma hyopneumoniae), this protein is Histidine--tRNA ligase.